The following is a 1074-amino-acid chain: Zinc finger protein 518B (1074 aa).

The span at 12 to 24 shows a compositional bias: polar residues; it reads HLNGGHNSLTMSP. Residues 12 to 36 are disordered; the sequence is HLNGGHNSLTMSPKQPDANGAPRPN. 2 consecutive C2H2-type zinc fingers follow at residues 162–184 and 190–213; these read FICSHCSYISYTKGEFQRHLVKH and YQCEYCDYGAIRNDYIVKHTKRVH. Glycyl lysine isopeptide (Lys-Gly) (interchain with G-Cter in SUMO2) cross-links involve residues Lys482, Lys491, and Lys558. A disordered region spans residues 568 to 590; it reads SNRKQEDNQTEEHKAVSTVGQIS. Basic and acidic residues predominate over residues 570 to 582; the sequence is RKQEDNQTEEHKA. A Glycyl lysine isopeptide (Lys-Gly) (interchain with G-Cter in SUMO2) cross-link involves residue Lys594. Disordered stretches follow at residues 603–632 and 678–704; these read TGEDRSQQPGDKPLELKNSERTNNTNDGPV and KPSSLASNSAHRRSVGQASKGTSKATS. Positions 604-622 are enriched in basic and acidic residues; sequence GEDRSQQPGDKPLELKNSE. The span at 693-704 shows a compositional bias: polar residues; it reads GQASKGTSKATS. Residues Lys809, Lys846, and Lys860 each participate in a glycyl lysine isopeptide (Lys-Gly) (interchain with G-Cter in SUMO2) cross-link. The C2H2-type 3 zinc finger occupies 1036–1058; it reads FKCWFCGRLYEDQEEWMSHGQRH.

It belongs to the krueppel C2H2-type zinc-finger protein family.

It localises to the nucleus. Through its association with the EHMT1-EHMT2/G9A and PRC2/EED-EZH2 histone methyltransferase complexes may function in gene silencing, regulating repressive post-translational methylation of histone tails at promoters of target genes. The chain is Zinc finger protein 518B (ZNF518B) from Homo sapiens (Human).